We begin with the raw amino-acid sequence, 470 residues long: 6-phospho-beta-galactosidase (470 aa).

Gln19, His116, Asn159, Glu160, and Asn297 together coordinate D-galactose 6-phosphate. Glu160 functions as the Proton donor in the catalytic mechanism. Glu375 (nucleophile) is an active-site residue. D-galactose 6-phosphate contacts are provided by Ser430, Trp431, Lys437, and Tyr439.

Belongs to the glycosyl hydrolase 1 family.

It carries out the reaction a 6-phospho-beta-D-galactoside + H2O = D-galactose 6-phosphate + an alcohol. The protein operates within carbohydrate metabolism; lactose degradation; D-galactose 6-phosphate and beta-D-glucose from lactose 6-phosphate: step 1/1. In Staphylococcus aureus (strain USA300), this protein is 6-phospho-beta-galactosidase.